The sequence spans 338 residues: RNA 3'-terminal phosphate cyclase (338 aa).

ATP-binding positions include glutamine 103 and tyrosine 283–glutamine 287. Catalysis depends on histidine 308, which acts as the Tele-AMP-histidine intermediate.

It belongs to the RNA 3'-terminal cyclase family. Type 1 subfamily.

The protein localises to the cytoplasm. It carries out the reaction a 3'-end 3'-phospho-ribonucleotide-RNA + ATP = a 3'-end 2',3'-cyclophospho-ribonucleotide-RNA + AMP + diphosphate. Its function is as follows. Catalyzes the conversion of 3'-phosphate to a 2',3'-cyclic phosphodiester at the end of RNA. The mechanism of action of the enzyme occurs in 3 steps: (A) adenylation of the enzyme by ATP; (B) transfer of adenylate to an RNA-N3'P to produce RNA-N3'PP5'A; (C) and attack of the adjacent 2'-hydroxyl on the 3'-phosphorus in the diester linkage to produce the cyclic end product. The biological role of this enzyme is unknown but it is likely to function in some aspects of cellular RNA processing. The polypeptide is RNA 3'-terminal phosphate cyclase (Escherichia coli O6:K15:H31 (strain 536 / UPEC)).